We begin with the raw amino-acid sequence, 817 residues long: Probable beta-glucosidase G (817 aa).

A signal peptide spans 1-20; sequence MASIAHLIFSGLLAATVANS. Asparagine 40, asparagine 58, asparagine 229, and asparagine 276 each carry an N-linked (GlcNAc...) asparagine glycan. Aspartate 304 is an active-site residue. 10 N-linked (GlcNAc...) asparagine glycosylation sites follow: asparagine 343, asparagine 350, asparagine 402, asparagine 507, asparagine 563, asparagine 584, asparagine 623, asparagine 662, asparagine 679, and asparagine 715.

It belongs to the glycosyl hydrolase 3 family.

The protein localises to the secreted. It catalyses the reaction Hydrolysis of terminal, non-reducing beta-D-glucosyl residues with release of beta-D-glucose.. Its pathway is glycan metabolism; cellulose degradation. Functionally, beta-glucosidases are one of a number of cellulolytic enzymes involved in the degradation of cellulosic biomass. Catalyzes the last step releasing glucose from the inhibitory cellobiose. The sequence is that of Probable beta-glucosidase G (bglG) from Neosartorya fischeri (strain ATCC 1020 / DSM 3700 / CBS 544.65 / FGSC A1164 / JCM 1740 / NRRL 181 / WB 181) (Aspergillus fischerianus).